The sequence spans 158 residues: Complexin-3 (158 aa).

The tract at residues 14-47 is disordered; sequence KNLTGSLGGGEDKGDGDKSAAEAQGMSREEYEEY. Basic and acidic residues predominate over residues 23–33; that stretch reads GEDKGDGDKSA. A coiled-coil region spans residues 39–74; sequence MSREEYEEYQKQLVEEKMERDAQFTQRKAERATLRS. Cys155 carries the post-translational modification Cysteine methyl ester. A lipid anchor (S-farnesyl cysteine) is attached at Cys155. Positions 156-158 are cleaved as a propeptide — removed in mature form; sequence HIM.

Belongs to the complexin/synaphin family. In terms of assembly, binds to the SNARE core complex containing SNAP25, VAMP2 and STX1A. Post-translationally, farnesylation mediates presynaptic targeting. In terms of tissue distribution, present in many brain regions, including hippocampus and cerebellum (at protein level). Expressed in the retina (at protein level). Expressed in retinal amacrine cells (at protein level). Expressed in retinal photoreceptor ribbon synapses. Expressed in the retinal inner nuclear layer, at bipolar cells (at protein level). Expressed in cone photoreceptor synaptic terminals (at protein level).

The protein resides in the synapse. It is found in the cell membrane. Functionally, complexin that regulates SNARE protein complex-mediated synaptic vesicle fusion. Required for the maintenance of synaptic ultrastructure in the adult retina. Positively regulates synaptic transmission through synaptic vesicle availability and exocytosis of neurotransmitters at photoreceptor ribbon synapses in the retina. Suppresses tonic photoreceptor activity and baseline 'noise' by suppression of Ca(2+) vesicle tonic release and the facilitation of evoked synchronous and asynchronous Ca(2+) vesicle release. The chain is Complexin-3 (Cplx3) from Mus musculus (Mouse).